Consider the following 286-residue polypeptide: Undecaprenyl-diphosphatase (286 aa).

Transmembrane regions (helical) follow at residues 17–37 (VVLG…TAHL), 49–69 (PGVA…IGYF), 98–118 (IAIA…KLFW), 126–146 (LRSV…LALA), 159–179 (VQGL…IPGV), 204–224 (FLLG…GAFA), 232–252 (LPML…IAWL), and 261–281 (TWPF…LVLA).

It belongs to the UppP family.

It is found in the cell inner membrane. The catalysed reaction is di-trans,octa-cis-undecaprenyl diphosphate + H2O = di-trans,octa-cis-undecaprenyl phosphate + phosphate + H(+). Its function is as follows. Catalyzes the dephosphorylation of undecaprenyl diphosphate (UPP). Confers resistance to bacitracin. This chain is Undecaprenyl-diphosphatase, found in Synechococcus sp. (strain RCC307).